The sequence spans 413 residues: uncharacterized protein (413 aa).

7 helical membrane-spanning segments follow: residues 10 to 32 (GLTIHLSLFLLSLLYALNAGRLP), 162 to 184 (VFLHTGLIHVLVVSGLHVGLVFL), 189 to 211 (LLPRFYGEVLGLVGVLFYSAFLV), 232 to 254 (LSFRRYCSLCVLFFTGTLMLFFF), 259 to 276 (YSYSFWLSFFAVLYILLV), 288 to 310 (ALMVSLGAFTGTAPLIASFSFVT), and 325 to 347 (FAYALFGVLSLLTLFSFPPSLIL).

The protein resides in the cell membrane. This is an uncharacterized protein from Aquifex aeolicus (strain VF5).